The following is a 350-amino-acid chain: Ketol-acid reductoisomerase (NADP(+)) (350 aa).

Positions 4 to 187 constitute a KARI N-terminal Rossmann domain; it reads VSITTDYSRM…GGARANIIKT (184 aa). Residues 30 to 33, Arg53, Thr58, and 88 to 91 each bind NADP(+); these read YGSQ and DMVQ. The active site involves His113. Gly139 lines the NADP(+) pocket. Residues 188–333 form the KARI C-terminal knotted domain; sequence TFKEETETDL…KQLRAKMVWL (146 aa). Residues Asp196, Glu200, Glu232, and Glu236 each coordinate Mg(2+). Ser257 is a binding site for substrate.

This sequence belongs to the ketol-acid reductoisomerase family. The cofactor is Mg(2+).

It carries out the reaction (2R)-2,3-dihydroxy-3-methylbutanoate + NADP(+) = (2S)-2-acetolactate + NADPH + H(+). It catalyses the reaction (2R,3R)-2,3-dihydroxy-3-methylpentanoate + NADP(+) = (S)-2-ethyl-2-hydroxy-3-oxobutanoate + NADPH + H(+). The protein operates within amino-acid biosynthesis; L-isoleucine biosynthesis; L-isoleucine from 2-oxobutanoate: step 2/4. It functions in the pathway amino-acid biosynthesis; L-valine biosynthesis; L-valine from pyruvate: step 2/4. Its function is as follows. Involved in the biosynthesis of branched-chain amino acids (BCAA). Catalyzes an alkyl-migration followed by a ketol-acid reduction of (S)-2-acetolactate (S2AL) to yield (R)-2,3-dihydroxy-isovalerate. In the isomerase reaction, S2AL is rearranged via a Mg-dependent methyl migration to produce 3-hydroxy-3-methyl-2-ketobutyrate (HMKB). In the reductase reaction, this 2-ketoacid undergoes a metal-dependent reduction by NADPH to yield (R)-2,3-dihydroxy-isovalerate. The chain is Ketol-acid reductoisomerase (NADP(+)) from Xylella fastidiosa (strain 9a5c).